Reading from the N-terminus, the 338-residue chain is DNA-directed RNA polymerase subunit alpha (338 aa).

An alpha N-terminal domain (alpha-NTD) region spans residues 1-226; it reads MLIAQRPTLT…ELFGLARELN (226 aa). Positions 243–338 are alpha C-terminal domain (alpha-CTD); that stretch reads LAADLALPIE…DADYADEQYN (96 aa).

The protein belongs to the RNA polymerase alpha chain family. As to quaternary structure, homodimer. The RNAP catalytic core consists of 2 alpha, 1 beta, 1 beta' and 1 omega subunit. When a sigma factor is associated with the core the holoenzyme is formed, which can initiate transcription.

The catalysed reaction is RNA(n) + a ribonucleoside 5'-triphosphate = RNA(n+1) + diphosphate. In terms of biological role, DNA-dependent RNA polymerase catalyzes the transcription of DNA into RNA using the four ribonucleoside triphosphates as substrates. This chain is DNA-directed RNA polymerase subunit alpha, found in Beutenbergia cavernae (strain ATCC BAA-8 / DSM 12333 / CCUG 43141 / JCM 11478 / NBRC 16432 / NCIMB 13614 / HKI 0122).